The chain runs to 358 residues: UDP-N-acetylglucosamine--N-acetylmuramyl-(pentapeptide) pyrophosphoryl-undecaprenol N-acetylglucosamine transferase (358 aa).

UDP-N-acetyl-alpha-D-glucosamine contacts are provided by residues 11 to 13 (TGG), arginine 163, serine 191, isoleucine 245, and glutamine 290.

This sequence belongs to the glycosyltransferase 28 family. MurG subfamily.

The protein localises to the cell inner membrane. It carries out the reaction di-trans,octa-cis-undecaprenyl diphospho-N-acetyl-alpha-D-muramoyl-L-alanyl-D-glutamyl-meso-2,6-diaminopimeloyl-D-alanyl-D-alanine + UDP-N-acetyl-alpha-D-glucosamine = di-trans,octa-cis-undecaprenyl diphospho-[N-acetyl-alpha-D-glucosaminyl-(1-&gt;4)]-N-acetyl-alpha-D-muramoyl-L-alanyl-D-glutamyl-meso-2,6-diaminopimeloyl-D-alanyl-D-alanine + UDP + H(+). Its pathway is cell wall biogenesis; peptidoglycan biosynthesis. In terms of biological role, cell wall formation. Catalyzes the transfer of a GlcNAc subunit on undecaprenyl-pyrophosphoryl-MurNAc-pentapeptide (lipid intermediate I) to form undecaprenyl-pyrophosphoryl-MurNAc-(pentapeptide)GlcNAc (lipid intermediate II). This chain is UDP-N-acetylglucosamine--N-acetylmuramyl-(pentapeptide) pyrophosphoryl-undecaprenol N-acetylglucosamine transferase, found in Janthinobacterium sp. (strain Marseille) (Minibacterium massiliensis).